The primary structure comprises 301 residues: Haloalkane dehalogenase (301 aa).

One can recognise an AB hydrolase-1 domain in the interval Pro47–Asp284. The active-site Nucleophile is Asp123. The active-site Proton donor is Asp250. His279 serves as the catalytic Proton acceptor.

Belongs to the haloalkane dehalogenase family. Type 1 subfamily. As to quaternary structure, monomer.

The enzyme catalyses 1-haloalkane + H2O = a halide anion + a primary alcohol + H(+). Catalyzes hydrolytic cleavage of carbon-halogen bonds in halogenated aliphatic compounds, leading to the formation of the corresponding primary alcohols, halide ions and protons. In Mycolicibacterium paratuberculosis (strain ATCC BAA-968 / K-10) (Mycobacterium paratuberculosis), this protein is Haloalkane dehalogenase.